Reading from the N-terminus, the 348-residue chain is Protein RecA (348 aa).

66 to 73 contributes to the ATP binding site; that stretch reads GPESSGKT.

This sequence belongs to the RecA family.

The protein resides in the cytoplasm. Can catalyze the hydrolysis of ATP in the presence of single-stranded DNA, the ATP-dependent uptake of single-stranded DNA by duplex DNA, and the ATP-dependent hybridization of homologous single-stranded DNAs. It interacts with LexA causing its activation and leading to its autocatalytic cleavage. This is Protein RecA from Legionella pneumophila (strain Paris).